Here is a 234-residue protein sequence, read N- to C-terminus: SPX domain-containing protein 6 (234 aa).

The SPX domain occupies 1–137; the sequence is MKFGKLLKRQ…GGALAAPVAE (137 aa). Residues 202 to 234 are disordered; sequence GSSTHGRHSLPPLTLPDSDWLRSFQPPSPIPIQ.

As to expression, predominantly expressed in roots and leaves.

Its function is as follows. May be involved in maintaining cellular Pi homeostasis when plants are exposed to an external change in Pi. The polypeptide is SPX domain-containing protein 6 (Oryza sativa subsp. japonica (Rice)).